The following is a 200-amino-acid chain: MANIAVQRIKREFKEVLKSEETSKNQIKVDLVDENFTELRGEIAGPPDTPYEGGRYQLEIKIPETYPFNPPKVRFITKIWHPNISSVTGAICLDILKDQWAAAMTLRTVLLSLQALLAAAEPDDPQDAVVANQYKQNPEMFKQTARLWAHVYAGAPVSSPEYTKKIENLCAMGFDRNAVIVALSSKSWDVETATELLLSN.

Alanine 2 bears the N-acetylalanine mark. The region spanning 4 to 154 is the UBC core domain; the sequence is IAVQRIKREF…ARLWAHVYAG (151 aa). Lysine 14 bears the N6-acetyllysine; alternate mark. Residue lysine 14 forms a Glycyl lysine isopeptide (Lys-Gly) (interchain with G-Cter in SUMO); alternate linkage. Residue lysine 14 forms a Glycyl lysine isopeptide (Lys-Gly) (interchain with G-Cter in SUMO1); alternate linkage. Cysteine 92 acts as the Glycyl thioester intermediate in catalysis. Residue serine 159 is modified to Phosphoserine. The region spanning 160-200 is the UBA domain; it reads PEYTKKIENLCAMGFDRNAVIVALSSKSWDVETATELLLSN.

Belongs to the ubiquitin-conjugating enzyme family. In terms of assembly, interacts with RNF138/NARF. Interacts with BRCA1. In terms of processing, sumoylation at Lys-14 impairs catalytic activity.

It is found in the cytoplasm. It catalyses the reaction S-ubiquitinyl-[E1 ubiquitin-activating enzyme]-L-cysteine + [E2 ubiquitin-conjugating enzyme]-L-cysteine = [E1 ubiquitin-activating enzyme]-L-cysteine + S-ubiquitinyl-[E2 ubiquitin-conjugating enzyme]-L-cysteine.. The protein operates within protein modification; protein ubiquitination. In terms of biological role, accepts ubiquitin from the E1 complex and catalyzes its covalent attachment to other proteins. In vitro, in the presence or in the absence of BRCA1-BARD1 E3 ubiquitin-protein ligase complex, catalyzes the synthesis of 'Lys-48'-linked polyubiquitin chains. Does not transfer ubiquitin directly to but elongates monoubiquitinated substrate protein. Mediates the selective degradation of short-lived and abnormal proteins, such as the endoplasmic reticulum-associated degradation (ERAD) of misfolded lumenal proteins. Ubiquitinates huntingtin. May mediate foam cell formation by the suppression of apoptosis of lipid-bearing macrophages through ubiquitination and subsequence degradation of p53/TP53. Proposed to be involved in ubiquitination and proteolytic processing of NF-kappa-B; in vitro supports ubiquitination of NFKB1. The protein is Ubiquitin-conjugating enzyme E2 K (UBE2K) of Bos taurus (Bovine).